The primary structure comprises 553 residues: Dihydrolipoyllysine-residue acetyltransferase component of pyruvate dehydrogenase complex (553 aa).

Positions 4 to 78 constitute a Lipoyl-binding 1 domain; the sequence is AIEIKVPDIG…SEGSVLVMLE (75 aa). The residue at position 44 (K44) is an N6-lipoyllysine. A disordered region spans residues 97–118; that stretch reads AAAAPAPAPAPAAAPAAAPAAG. The Lipoyl-binding 2 domain maps to 122–196; that stretch reads TIEVKVPDIG…AEGTLLLILE (75 aa). Residue K162 is modified to N6-lipoyllysine. The region spanning 250 to 287 is the Peripheral subunit-binding (PSBD) domain; sequence HASPSVRKFARELGVDVSRVPGTGPKGRITQEDVQGYV. Residue H526 is part of the active site.

Belongs to the 2-oxoacid dehydrogenase family. In terms of assembly, forms a 24-polypeptide structural core with octahedral symmetry. Requires (R)-lipoate as cofactor.

The enzyme catalyses N(6)-[(R)-dihydrolipoyl]-L-lysyl-[protein] + acetyl-CoA = N(6)-[(R)-S(8)-acetyldihydrolipoyl]-L-lysyl-[protein] + CoA. The pyruvate dehydrogenase complex catalyzes the overall conversion of pyruvate to acetyl-CoA and CO(2). It contains multiple copies of three enzymatic components: pyruvate dehydrogenase (E1), dihydrolipoamide acetyltransferase (E2) and lipoamide dehydrogenase (E3). The protein is Dihydrolipoyllysine-residue acetyltransferase component of pyruvate dehydrogenase complex (pdhB) of Cupriavidus necator (strain ATCC 17699 / DSM 428 / KCTC 22496 / NCIMB 10442 / H16 / Stanier 337) (Ralstonia eutropha).